Reading from the N-terminus, the 69-residue chain is UPF0337 protein YjbJ (69 aa).

Belongs to the UPF0337 (CsbD) family.

The sequence is that of UPF0337 protein YjbJ (yjbJ) from Escherichia coli O157:H7.